A 229-amino-acid chain; its full sequence is MEVNKVRIHDLPEEDRPRERLIRSGPESLSNAELLGIVLRTGSKEENVISLCSRILAEYNIKQLSLANVSRLTQVHGVGKAKAAQIAAVFELARRLETFVEEPKRKICSPKDVYALMYPRMREQKKEKFITLYLDTKNQILKEEVVSIGSLNASIVHPREVFKSALLESSASVIMVHNHPSGDPSPSREDIMVTEKLVEGGKLLGIDILDHIIIGDGRYVSLKDEGFVR.

The MPN domain maps to 106–228; that stretch reads KICSPKDVYA…YVSLKDEGFV (123 aa). The Zn(2+) site is built by His-177, His-179, and Asp-190. Residues 177 to 190 carry the JAMM motif motif; that stretch reads HNHPSGDPSPSRED.

Belongs to the UPF0758 family.

This Methanosarcina acetivorans (strain ATCC 35395 / DSM 2834 / JCM 12185 / C2A) protein is UPF0758 protein MA_1979.